A 573-amino-acid chain; its full sequence is CTP synthase (573 aa).

Positions 1-281 (MGQTRIQART…DAYVVRRLGL (281 aa)) are amidoligase domain. Serine 23 is a binding site for CTP. Residue serine 23 coordinates UTP. ATP-binding positions include 24–29 (SLGKGL) and aspartate 81. 2 residues coordinate Mg(2+): aspartate 81 and glutamate 155. Residues 162–164 (DIE), 202–207 (KTKPTQ), and lysine 238 each bind CTP. Residues 202–207 (KTKPTQ) and lysine 238 contribute to the UTP site. The Glutamine amidotransferase type-1 domain maps to 306 to 554 (EVALVGKYVD…IAAALKYKLA (249 aa)). Residue glycine 369 coordinates L-glutamine. Cysteine 396 (nucleophile; for glutamine hydrolysis) is an active-site residue. L-glutamine-binding positions include 397-400 (LGLQ), glutamate 419, and arginine 480. Residues histidine 527 and glutamate 529 contribute to the active site.

It belongs to the CTP synthase family. Homotetramer.

The catalysed reaction is UTP + L-glutamine + ATP + H2O = CTP + L-glutamate + ADP + phosphate + 2 H(+). It catalyses the reaction L-glutamine + H2O = L-glutamate + NH4(+). It carries out the reaction UTP + NH4(+) + ATP = CTP + ADP + phosphate + 2 H(+). The protein operates within pyrimidine metabolism; CTP biosynthesis via de novo pathway; CTP from UDP: step 2/2. Allosterically activated by GTP, when glutamine is the substrate; GTP has no effect on the reaction when ammonia is the substrate. The allosteric effector GTP functions by stabilizing the protein conformation that binds the tetrahedral intermediate(s) formed during glutamine hydrolysis. Inhibited by the product CTP, via allosteric rather than competitive inhibition. Functionally, catalyzes the ATP-dependent amination of UTP to CTP with either L-glutamine or ammonia as the source of nitrogen. Regulates intracellular CTP levels through interactions with the four ribonucleotide triphosphates. In Nocardia farcinica (strain IFM 10152), this protein is CTP synthase.